Consider the following 350-residue polypeptide: NADH-quinone oxidoreductase subunit H (350 aa).

Transmembrane regions (helical) follow at residues 31–51, 102–122, 132–152, 171–191, 205–225, 263–283, 286–306, and 322–342; these read LMLLAVVGVLAFLFLNALFLI, LLAPVLIFTIPVMLFLVIPFG, LGVLYLVAITSVETIVLWMAG, MLSYEMPVILAMLSVVMMAGS, WFIFLQPVGFLIYFIAVNAEF, FMIGAIMVTTLFLGGWNAPFG, FIPSWLWFIIKMYFVITLYMW, and FAWKFLLPVSLANIFITGFGL.

This sequence belongs to the complex I subunit 1 family. In terms of assembly, NDH-1 is composed of 14 different subunits. Subunits NuoA, H, J, K, L, M, N constitute the membrane sector of the complex.

Its subcellular location is the cell membrane. The catalysed reaction is a quinone + NADH + 5 H(+)(in) = a quinol + NAD(+) + 4 H(+)(out). Its function is as follows. NDH-1 shuttles electrons from NADH, via FMN and iron-sulfur (Fe-S) centers, to quinones in the respiratory chain. The immediate electron acceptor for the enzyme in this species is believed to be ubiquinone. Couples the redox reaction to proton translocation (for every two electrons transferred, four hydrogen ions are translocated across the cytoplasmic membrane), and thus conserves the redox energy in a proton gradient. This subunit may bind ubiquinone. This Carboxydothermus hydrogenoformans (strain ATCC BAA-161 / DSM 6008 / Z-2901) protein is NADH-quinone oxidoreductase subunit H.